The sequence spans 591 residues: L-fucose isomerase (591 aa).

Residues Glu-337 and Asp-361 each act as proton acceptor in the active site. Mn(2+)-binding residues include Glu-337, Asp-361, and His-528.

Belongs to the L-fucose isomerase family. Homohexamer. The cofactor is Mn(2+).

The protein resides in the cytoplasm. The catalysed reaction is L-fucose = L-fuculose. Its pathway is carbohydrate degradation; L-fucose degradation; L-lactaldehyde and glycerone phosphate from L-fucose: step 1/3. Converts the aldose L-fucose into the corresponding ketose L-fuculose. The polypeptide is L-fucose isomerase (Salmonella paratyphi B (strain ATCC BAA-1250 / SPB7)).